Reading from the N-terminus, the 201-residue chain is MPPRPRFDRRAPVRELPNINERIKYPKLRVVDADGTQLGIISREEALDVAQDRELDLVLVSEKADPPVCRIMNYGKFKFEQEKKAKEAKKKSHQTEVKEVKMRYKIDEHDYQVRIGQATRFLKAGDKVKCTVIFRGREIQHTNLAESLLARMAKDLEEPAEVQQAPKREGRNMIMFLTPRKTPLIKKEQELEEASKAKRTI.

Belongs to the IF-3 family. Monomer.

It is found in the cytoplasm. Functionally, IF-3 binds to the 30S ribosomal subunit and shifts the equilibrium between 70S ribosomes and their 50S and 30S subunits in favor of the free subunits, thus enhancing the availability of 30S subunits on which protein synthesis initiation begins. The chain is Translation initiation factor IF-3 from Prochlorococcus marinus (strain SARG / CCMP1375 / SS120).